Consider the following 510-residue polypeptide: MIWHVQNENFILDSTRIFMKAFHLLLFHGSFIFPECILIFGLILLLMIDSTSDQKDIPWLYFISSTSLVMSITALLFRWREEPMISFSGNFQTNNFNEIFQFLILLCSTLCIPLSVEYIECTEMAITEFLLFVLTATLGGMFLCGANDLITIFVAPESFSLCSYLLSGYTKRDVRSNEATTKYLLMGGASSSILVHGFSWLYGSSGGEIELQEIVNGLINTQMYNSPGISIALISITVGIGFKLSPAPSHQWTPDVYEGSPTPVVAFLSVTSKVAASASATRIFDIPFYFSSNEWHLLLEILAILSMILGNLIAITQTSMKRMLAYSSIGQIGYVIIGIIVGDSNDGYASMITYMLFYISMNLGTFARIVSFGLRTGTDNIRDYAGLYTKDPFLALSSALCLLSLGGLPPLAGFFGKLHLFWCGWQAGLYFLVSIGLLTSVVSIYYYLKIIKLLMTGRNQEITPHVRNYRRSLLRSNNSIELSMIVCVIASTIPGISMNPIIAIAQDTLF.

Helical transmembrane passes span 24 to 44 (LLLF…GLIL), 57 to 77 (IPWL…ALLF), 99 to 119 (IFQF…VEYI), 124 to 144 (MAIT…MFLC), 183 to 203 (YLLM…WLYG), 227 to 247 (PGIS…LSPA), 295 to 315 (WHLL…LIAI), 323 to 343 (MLAY…IVGD), 347 to 367 (GYAS…GTFA), 395 to 415 (ALSS…AGFF), 418 to 438 (LHLF…IGLL), and 484 to 504 (MIVC…IIAI).

This sequence belongs to the complex I subunit 2 family. In terms of assembly, NDH is composed of at least 16 different subunits, 5 of which are encoded in the nucleus.

It is found in the plastid. Its subcellular location is the chloroplast thylakoid membrane. It carries out the reaction a plastoquinone + NADH + (n+1) H(+)(in) = a plastoquinol + NAD(+) + n H(+)(out). The enzyme catalyses a plastoquinone + NADPH + (n+1) H(+)(in) = a plastoquinol + NADP(+) + n H(+)(out). Its function is as follows. NDH shuttles electrons from NAD(P)H:plastoquinone, via FMN and iron-sulfur (Fe-S) centers, to quinones in the photosynthetic chain and possibly in a chloroplast respiratory chain. The immediate electron acceptor for the enzyme in this species is believed to be plastoquinone. Couples the redox reaction to proton translocation, and thus conserves the redox energy in a proton gradient. The chain is NAD(P)H-quinone oxidoreductase subunit 2 B, chloroplastic from Calycanthus floridus var. glaucus (Eastern sweetshrub).